A 556-amino-acid chain; its full sequence is Solute carrier family 22 member 20 (556 aa).

Over 1–15 (MAFTDLLDALGGVGR) the chain is Cytoplasmic. The chain crosses the membrane as a helical span at residues 16 to 36 (FQLVYTALLLLPCGLLACHTF). At 37–137 (LQNFTAAAPP…LVCEARTLRD (101 aa)) the chain is on the extracellular side. 4 N-linked (GlcNAc...) asparagine glycosylation sites follow: asparagine 39, asparagine 54, asparagine 61, and asparagine 96. Residues 138 to 158 (LAQSIYMSGVLVGAALFGGLA) form a helical membrane-spanning segment. Residues 159 to 166 (DRLGRKAP) lie on the Cytoplasmic side of the membrane. The helical transmembrane segment at 167–187 (LVWSYLQLAVSGAATAYVGSF) threads the bilayer. Topologically, residues 188–194 (SAYCVFR) are extracellular. The helical transmembrane segment at 195–215 (FLMGMTFSGIILNSLSLVVEW) threads the bilayer. Over 216 to 225 (MPTRGRTVAG) the chain is Cytoplasmic. Residues 226–246 (ILLGFSFTLGQLILAGVAYLI) traverse the membrane as a helical segment. At 247–250 (RPWR) the chain is on the extracellular side. A helical membrane pass occupies residues 251–271 (WLQFAVSAPFLVFFLYSWWLP). The Cytoplasmic segment spans residues 272–339 (ESSRWLLLHG…DLFRTPAIRR (68 aa)). The chain crosses the membrane as a helical span at residues 340-360 (VTCCLMGVWFSNSVAYYGLAM). Residues 361-366 (DLQKFG) are Extracellular-facing. The helical transmembrane segment at 367–387 (LSIYLVQALFGIIDIPAMLVA) threads the bilayer. Residues 388 to 397 (TTTMIYVGRR) lie on the Cytoplasmic side of the membrane. A helical transmembrane segment spans residues 398–418 (ATVSSFLILAGLMVIANMFMP). Topologically, residues 419-425 (EDLQTLR) are extracellular. A helical membrane pass occupies residues 426–446 (TVQAALGKGCLASSFICVYLF). Residues 447–457 (TGELYPTEIRQ) lie on the Cytoplasmic side of the membrane. Residues 458 to 478 (MGMGFASVNARLGGLVAPLIT) form a helical membrane-spanning segment. Topologically, residues 479–485 (TLGEISP) are extracellular. A helical membrane pass occupies residues 486 to 506 (VLPPVSFGATSVLAGMAVACF). Over 507–556 (LTETRNVPLVETIAAMERRVKQGRSKRDTEQKSEEISLQQLGASPLKETI) the chain is Cytoplasmic. The span at 526–541 (VKQGRSKRDTEQKSEE) shows a compositional bias: basic and acidic residues. The segment at 526–556 (VKQGRSKRDTEQKSEEISLQQLGASPLKETI) is disordered.

This sequence belongs to the major facilitator (TC 2.A.1) superfamily. Organic cation transporter (TC 2.A.1.19) family. In terms of tissue distribution, highly expressed in olfactory mucosa. Weakly expressed in testis. Not detected in heart, spleen, lung, kidney or brain.

The protein localises to the membrane. Organic anion transporter that mediates the uptake of estrone sulfate. Inhibited by probenecid, propionate, 2-methylbutyrate, 3-methylbutyrate, benzoate, heptanoate and 2-ethylhaxanoate. May act as an odorant transporter. The sequence is that of Solute carrier family 22 member 20 (Slc22a20) from Mus musculus (Mouse).